The following is a 173-amino-acid chain: dCTP deaminase, dUMP-forming (173 aa).

Residues 93 to 98 (RSSTGR), Asp111, 119 to 121 (TLE), Gln138, and Tyr151 contribute to the dCTP site. The active-site Proton donor/acceptor is Glu121.

It belongs to the dCTP deaminase family. As to quaternary structure, homotrimer.

The enzyme catalyses dCTP + 2 H2O = dUMP + NH4(+) + diphosphate. Its pathway is pyrimidine metabolism; dUMP biosynthesis; dUMP from dCTP: step 1/1. In terms of biological role, bifunctional enzyme that catalyzes both the deamination of dCTP to dUTP and the hydrolysis of dUTP to dUMP without releasing the toxic dUTP intermediate. In Clostridium botulinum (strain Eklund 17B / Type B), this protein is dCTP deaminase, dUMP-forming.